The following is a 127-amino-acid chain: Small ribosomal subunit protein bS6 (127 aa).

Residues Pro-99–Ala-127 are disordered. Low complexity predominate over residues Ser-110 to Ala-127.

The protein belongs to the bacterial ribosomal protein bS6 family.

In terms of biological role, binds together with bS18 to 16S ribosomal RNA. The protein is Small ribosomal subunit protein bS6 of Dechloromonas aromatica (strain RCB).